The chain runs to 226 residues: Leucyl/phenylalanyl-tRNA--protein transferase (226 aa).

This sequence belongs to the L/F-transferase family.

The protein resides in the cytoplasm. The enzyme catalyses N-terminal L-lysyl-[protein] + L-leucyl-tRNA(Leu) = N-terminal L-leucyl-L-lysyl-[protein] + tRNA(Leu) + H(+). It carries out the reaction N-terminal L-arginyl-[protein] + L-leucyl-tRNA(Leu) = N-terminal L-leucyl-L-arginyl-[protein] + tRNA(Leu) + H(+). The catalysed reaction is L-phenylalanyl-tRNA(Phe) + an N-terminal L-alpha-aminoacyl-[protein] = an N-terminal L-phenylalanyl-L-alpha-aminoacyl-[protein] + tRNA(Phe). Its function is as follows. Functions in the N-end rule pathway of protein degradation where it conjugates Leu, Phe and, less efficiently, Met from aminoacyl-tRNAs to the N-termini of proteins containing an N-terminal arginine or lysine. This chain is Leucyl/phenylalanyl-tRNA--protein transferase, found in Pseudomonas aeruginosa (strain UCBPP-PA14).